The sequence spans 1160 residues: Envelope glycoprotein (1160 aa).

Positions 1–22 are cleaved as a signal peptide; that stretch reads MDTPGSLQVIAIISLLLVGGAS. Residues 23-853 are Extracellular-facing; it reads QPATFLEKAL…DGSVWSQLQL (831 aa). Asn-50, Asn-95, Asn-109, Asn-134, Asn-148, Asn-232, Asn-254, Asn-304, Asn-323, Asn-621, Asn-664, Asn-722, and Asn-771 each carry an N-linked (GlcNAc...) asparagine; by host glycan. Residues 230–251 are disordered; sequence VPNSTLSPTGTTDFTKFTPNPI. The helical transmembrane segment at 854-874 threads the bilayer; it reads IIVVITCTIPLLWVLNTCLFF. Residues 875–1048 are Cytoplasmic-facing; it reads KLRRAIRRER…VNQHAEYMGK (174 aa). Residues 1049-1069 traverse the membrane as a helical segment; that stretch reads PVIVTLAGLVITPVGLAWIPL. At 1070-1127 the chain is on the extracellular side; it reads PQQEPLEKLFMVPNSMPHVTVAMADYHETKEMGKIVKDINNEELLLVKPQLFKWGPEG. Residues 1128–1148 form a helical membrane-spanning segment; that stretch reads FFVACPLVIRGVVTGHSLLHI. Over 1149-1160 the chain is Cytoplasmic; that stretch reads ACPATAVQAEGT.

In terms of assembly, the mature envelope protein (Env) consists of a trimer of SU-TM heterodimers attached by non-covalent interactions or by a labile interchain disulfide bond. Post-translationally, specific enzymatic cleavages in vivo yield mature proteins. Envelope glycoproteins are synthesized as an inactive precursor that is N-glycosylated and processed likely by host cell furin or by a furin-like protease in the Golgi to yield the mature SU and TM proteins. The cleavage site between SU and TM requires the minimal sequence [KR]-X-[KR]-R.

Its subcellular location is the virion membrane. The protein localises to the host cell membrane. Functionally, (SU) attaches the virus to the host cell by binding to its receptor. This interaction triggers the refolding of the transmembrane protein (TM) and is thought to activate its fusogenic potential by unmasking its fusion peptide. Fusion occurs at the host cell plasma membrane. In terms of biological role, (TM) acts as a class I viral fusion protein. Under the current model, the protein has at least 3 conformational states: pre-fusion native state, pre-hairpin intermediate state, and post-fusion hairpin state. During viral and target cell membrane fusion, the coiled coil regions (heptad repeats) assume a trimer-of-hairpins structure, positioning the fusion peptide in close proximity to the C-terminal region of the ectodomain. The formation of this structure appears to drive apposition and subsequent fusion of viral and target cell membranes. Membranes fusion leads to delivery of the nucleocapsid into the cytoplasm. The chain is Envelope glycoprotein (env) from Walleye dermal sarcoma virus (WDSV).